We begin with the raw amino-acid sequence, 637 residues long: 1-deoxy-D-xylulose-5-phosphate synthase (637 aa).

Residues H76 and 117–119 (GHS) contribute to the thiamine diphosphate site. Residue D148 coordinates Mg(2+). Residues 149–150 (GA), N177, Y294, and E381 contribute to the thiamine diphosphate site. N177 is a binding site for Mg(2+).

The protein belongs to the transketolase family. DXPS subfamily. As to quaternary structure, homodimer. Mg(2+) serves as cofactor. Thiamine diphosphate is required as a cofactor.

The enzyme catalyses D-glyceraldehyde 3-phosphate + pyruvate + H(+) = 1-deoxy-D-xylulose 5-phosphate + CO2. The protein operates within metabolic intermediate biosynthesis; 1-deoxy-D-xylulose 5-phosphate biosynthesis; 1-deoxy-D-xylulose 5-phosphate from D-glyceraldehyde 3-phosphate and pyruvate: step 1/1. In terms of biological role, catalyzes the acyloin condensation reaction between C atoms 2 and 3 of pyruvate and glyceraldehyde 3-phosphate to yield 1-deoxy-D-xylulose-5-phosphate (DXP). In Neisseria meningitidis serogroup B (strain ATCC BAA-335 / MC58), this protein is 1-deoxy-D-xylulose-5-phosphate synthase.